We begin with the raw amino-acid sequence, 337 residues long: Monoacylglycerol lipase abhd6-A (337 aa).

The Extracellular segment spans residues methionine 1 to proline 19. A helical; Signal-anchor for type II membrane protein membrane pass occupies residues isoleucine 20–tryptophan 42. Residues arginine 43–glutamate 337 are Cytoplasmic-facing. The AB hydrolase-1 domain occupies serine 73–proline 313. Serine 148 serves as the catalytic Nucleophile. Catalysis depends on charge relay system residues aspartate 278 and histidine 306.

Belongs to the AB hydrolase superfamily.

It is found in the late endosome membrane. Its subcellular location is the lysosome membrane. It localises to the mitochondrion membrane. The catalysed reaction is Hydrolyzes glycerol monoesters of long-chain fatty acids.. It catalyses the reaction 1-octanoylglycerol + H2O = octanoate + glycerol + H(+). It carries out the reaction 1-decanoylglycerol + H2O = decanoate + glycerol + H(+). The enzyme catalyses 1-dodecanoylglycerol + H2O = dodecanoate + glycerol + H(+). The catalysed reaction is 1-tetradecanoylglycerol + H2O = tetradecanoate + glycerol + H(+). It catalyses the reaction 2-hexadecanoylglycerol + H2O = glycerol + hexadecanoate + H(+). It carries out the reaction 2-(9Z-octadecenoyl)-glycerol + H2O = glycerol + (9Z)-octadecenoate + H(+). The enzyme catalyses 1-(9Z-octadecenoyl)-glycerol + H2O = glycerol + (9Z)-octadecenoate + H(+). The catalysed reaction is 2-(9Z,12Z-octadecadienoyl)-glycerol + H2O = (9Z,12Z)-octadecadienoate + glycerol + H(+). It catalyses the reaction 2-(5Z,8Z,11Z,14Z-eicosatetraenoyl)-glycerol + H2O = glycerol + (5Z,8Z,11Z,14Z)-eicosatetraenoate + H(+). It carries out the reaction 1-(5Z,8Z,11Z,14Z-eicosatetraenoyl)-glycerol + H2O = glycerol + (5Z,8Z,11Z,14Z)-eicosatetraenoate + H(+). The enzyme catalyses 1-(9Z,12Z-octadecadienoyl)-glycerol + H2O = (9Z,12Z)-octadecadienoate + glycerol + H(+). The catalysed reaction is 3-(9Z-octadecenoyl)-sn-glycero-1-phospho-(3'-(9Z-octadecenoyl)-1'-sn-glycerol) + H2O = 3-(9Z-octadecenoyl)-sn-glycero-1-phospho-(1'-sn-glycerol) + (9Z)-octadecenoate + H(+). It catalyses the reaction (S,S)-2-(9Z-octadecenoyl)-sn-glycero-1-phospho-(2'-(9Z-octadecenoyl)-1'-sn-glycerol) + H2O = (S,S)-2-(9Z-octadecenoyl)-sn-glycero-1-phospho-(1'-sn-glycerol) + (9Z)-octadecenoate + H(+). It carries out the reaction (R,R)-2-(9Z-octadecenoyl)-sn-glycero-3-phospho-(2'-(9Z-octadecenoyl)-3'-sn-glycerol) + H2O = (R,R)-2-(9Z-octadecenoyl)-sn-glycero-3-phospho-(3'-sn-glycerol) + (9Z)-octadecenoate + H(+). Functionally, lipase that preferentially hydrolysis medium-chain saturated monoacylglycerols including 2-arachidonoylglycerol. Through 2-arachidonoylglycerol degradation may regulate endocannabinoid signaling pathways. Also has a lysophosphatidyl lipase activity with a preference for lysophosphatidylglycerol among other lysophospholipids. Also able to degrade bis(monoacylglycero)phosphate (BMP) and constitutes the major enzyme for BMP catabolism. BMP, also known as lysobisphosphatidic acid, is enriched in late endosomes and lysosomes and plays a key role in the formation of intraluminal vesicles and in lipid sorting. The chain is Monoacylglycerol lipase abhd6-A (abhd6-a) from Xenopus laevis (African clawed frog).